A 157-amino-acid polypeptide reads, in one-letter code: Globin (157 aa).

N-acetylglycine is present on G1. Residues 8–155 (SLSADQKAAI…MANIIDAEQK (148 aa)) form the Globin domain. Heme b is bound by residues H70 and H102.

Belongs to the globin family. In terms of assembly, monomer.

The chain is Globin from Nerita albicilla (Ox-palate nerite).